A 75-amino-acid polypeptide reads, in one-letter code: Notewaprin-b (75 aa).

Positions 1–24 (MSSGGLLLLLGLLTLWAELTPVSS) are cleaved as a signal peptide. The region spanning 27–72 (RPKKPGLCPPRPQKPPCVRECKNDWICPGEQKCCRYGCIYECRDPI) is the WAP domain. 4 cysteine pairs are disulfide-bonded: C34–C60, C43–C64, C47–C59, and C53–C68.

The protein belongs to the venom waprin family. As to expression, expressed by the venom gland.

It localises to the secreted. In terms of biological role, damages membranes of susceptible bacteria. Has no hemolytic activity. Not toxic to mice. Does not inhibit the proteinases elastase and cathepsin G. The chain is Notewaprin-b from Notechis scutatus scutatus (Mainland tiger snake).